The following is a 422-amino-acid chain: L-threonine dehydratase biosynthetic IlvA (422 aa).

Lys-56 carries the post-translational modification N6-(pyridoxal phosphate)lysine. Residues Asn-83, 189–193, and Ser-315 each bind pyridoxal 5'-phosphate; that span reads GGGGL. Positions 339-413 constitute an ACT-like domain; the sequence is HYFILNFPQR…FDPSNIYINE (75 aa).

It belongs to the serine/threonine dehydratase family. As to quaternary structure, homotetramer. Requires pyridoxal 5'-phosphate as cofactor.

The enzyme catalyses L-threonine = 2-oxobutanoate + NH4(+). Its pathway is amino-acid biosynthesis; L-isoleucine biosynthesis; 2-oxobutanoate from L-threonine: step 1/1. Its function is as follows. Catalyzes the anaerobic formation of alpha-ketobutyrate and ammonia from threonine in a two-step reaction. The first step involved a dehydration of threonine and a production of enamine intermediates (aminocrotonate), which tautomerizes to its imine form (iminobutyrate). Both intermediates are unstable and short-lived. The second step is the nonenzymatic hydrolysis of the enamine/imine intermediates to form 2-ketobutyrate and free ammonia. In the low water environment of the cell, the second step is accelerated by RidA. The chain is L-threonine dehydratase biosynthetic IlvA (ilvA) from Staphylococcus epidermidis (strain ATCC 12228 / FDA PCI 1200).